The following is a 432-amino-acid chain: Gamma-glutamyl phosphate reductase (432 aa).

It belongs to the gamma-glutamyl phosphate reductase family.

The protein resides in the cytoplasm. The enzyme catalyses L-glutamate 5-semialdehyde + phosphate + NADP(+) = L-glutamyl 5-phosphate + NADPH + H(+). Its pathway is amino-acid biosynthesis; L-proline biosynthesis; L-glutamate 5-semialdehyde from L-glutamate: step 2/2. In terms of biological role, catalyzes the NADPH-dependent reduction of L-glutamate 5-phosphate into L-glutamate 5-semialdehyde and phosphate. The product spontaneously undergoes cyclization to form 1-pyrroline-5-carboxylate. The sequence is that of Gamma-glutamyl phosphate reductase from Corynebacterium melassecola.